A 412-amino-acid chain; its full sequence is Peptidyl-prolyl cis-trans isomerase FKBP8 (412 aa).

Positions 1–68 are disordered; it reads MASCAEPSEP…GQPPAEEAEQ (68 aa). The span at 22-50 shows a compositional bias: acidic residues; the sequence is EDFEVLDGVEDAEGEEEEEEEEEEEDDLS. The PPIase FKBP-type domain maps to 120 to 204; sequence GQVVTVHLQT…CLEVTLKTAV (85 aa). Residues D149 and D151 each coordinate Ca(2+). Residues 221–254 form a TPR 1 repeat; it reads ANRKRECGNAHYQRADFVLAANSYDLAIKAITSS. Residues K249, K271, K273, and K284 each participate in a glycyl lysine isopeptide (Lys-Gly) (interchain with G-Cter in ubiquitin) cross-link. TPR repeat units lie at residues 272 to 305 and 306 to 339; these read VKCLNNLAASQLKLDHYRAALRSCSLVLEHQPDN and IKALFRKGKVLAQQGEYSEAIPILRAALKLEPSN. S296 is subject to Phosphoserine. Residues K307, K314, K334, K340, K348, K351, and K352 each participate in a glycyl lysine isopeptide (Lys-Gly) (interchain with G-Cter in ubiquitin) cross-link. A helical membrane pass occupies residues 390–410; it reads WLFGATAVALGGVALSVVIAA.

In terms of assembly, homomultimers or heteromultimers (Potential). Forms heterodimer with calmodulin. When activated by calmodulin and calcium, interacts with the BH4 domain of BCL2 and weakly with BCL2L1/BCLX isoform Bcl-X(L). Does not bind and inhibit calcineurin. Interacts with ZFYVE27; may negatively regulate ZFYVE27 phosphorylation. As to quaternary structure, (Microbial infection) Interacts with hepatitis C/HCV protein NS5A. It depends on Ca(2+) as a cofactor. Ubiquitinated by PRKN during mitophagy, leading to its degradation and enhancement of mitophagy. Deubiquitinated by USP30. Widely expressed. Highest levels seen in the brain. Highly abundant in the retina.

The protein resides in the mitochondrion. It localises to the mitochondrion membrane. It catalyses the reaction [protein]-peptidylproline (omega=180) = [protein]-peptidylproline (omega=0). In terms of biological role, constitutively inactive PPiase, which becomes active when bound to calmodulin and calcium. Seems to act as a chaperone for BCL2, targets it to the mitochondria and modulates its phosphorylation state. The BCL2/FKBP8/calmodulin/calcium complex probably interferes with the binding of BCL2 to its targets. The active form of FKBP8 may therefore play a role in the regulation of apoptosis. Involved in the inhibition of viral infection by influenza A viruses (IAV). The protein is Peptidyl-prolyl cis-trans isomerase FKBP8 (FKBP8) of Homo sapiens (Human).